Here is a 92-residue protein sequence, read N- to C-terminus: Movement protein (92 aa).

Residues 38 to 58 (VIALVVILVSVGVFYLAYTLF) traverse the membrane as a helical segment.

The protein belongs to the mastrevirus movement protein family. In terms of assembly, interacts with the capsid protein (CP). Part of a MP-CP-viral DNA complex.

It localises to the host membrane. Its function is as follows. Involved in the viral transport within, and between cells. The sequence is that of Movement protein from Phaseolus vulgaris (Kidney bean).